The chain runs to 153 residues: Peptidyl-prolyl cis-trans isomerase FKBP15-1 (153 aa).

An N-terminal signal peptide occupies residues 1–25 (MMSSASAMKAVGFLLLLTILTLAYA). The region spanning 52–140 (GDKIKVHYRG…IFDTELVAVN (89 aa)) is the PPIase FKBP-type domain. The Prevents secretion from ER motif lies at 150–153 (KNEL).

The protein belongs to the FKBP-type PPIase family.

The protein resides in the endoplasmic reticulum lumen. It catalyses the reaction [protein]-peptidylproline (omega=180) = [protein]-peptidylproline (omega=0). Its function is as follows. PPIases accelerate the folding of proteins. It catalyzes the cis-trans isomerization of proline imidic peptide bonds in oligopeptides. The sequence is that of Peptidyl-prolyl cis-trans isomerase FKBP15-1 (FKBP15-1) from Arabidopsis thaliana (Mouse-ear cress).